The sequence spans 144 residues: NADPH-dependent 7-cyano-7-deazaguanine reductase (144 aa).

Polar residues predominate over residues 1–21; that stretch reads MSQSPIQNPTSDPNAQSVQET. The interval 1–27 is disordered; it reads MSQSPIQNPTSDPNAQSVQETSESKYG. C61 functions as the Thioimide intermediate in the catalytic mechanism. The active-site Proton donor is the D68. Substrate-binding positions include 83–85 and 102–103; these read VEL and HE.

It belongs to the GTP cyclohydrolase I family. QueF type 1 subfamily.

Its subcellular location is the cytoplasm. The catalysed reaction is 7-aminomethyl-7-carbaguanine + 2 NADP(+) = 7-cyano-7-deazaguanine + 2 NADPH + 3 H(+). It participates in tRNA modification; tRNA-queuosine biosynthesis. In terms of biological role, catalyzes the NADPH-dependent reduction of 7-cyano-7-deazaguanine (preQ0) to 7-aminomethyl-7-deazaguanine (preQ1). The sequence is that of NADPH-dependent 7-cyano-7-deazaguanine reductase from Acaryochloris marina (strain MBIC 11017).